Reading from the N-terminus, the 319-residue chain is Tetrahydromethanopterin S-methyltransferase subunit H (319 aa).

This sequence belongs to the MtrH family. The complex is composed of 8 subunits; MtrA, MtrB, MtrC, MtrD, MtrE, MtrF, MtrG and MtrH.

The catalysed reaction is 5-methyl-5,6,7,8-tetrahydromethanopterin + coenzyme M + 2 Na(+)(in) = 5,6,7,8-tetrahydromethanopterin + methyl-coenzyme M + 2 Na(+)(out). The protein operates within one-carbon metabolism; methanogenesis from CO(2); methyl-coenzyme M from 5,10-methylene-5,6,7,8-tetrahydromethanopterin: step 2/2. In terms of biological role, part of a complex that catalyzes the formation of methyl-coenzyme M and tetrahydromethanopterin from coenzyme M and methyl-tetrahydromethanopterin. This is an energy-conserving, sodium-ion translocating step. MtrH catalyzes the transfer of the methyl group from methyl-tetrahydromethanopterin to the corrinoid prosthetic group of MtrA. This Methanococcus maripaludis (strain DSM 14266 / JCM 13030 / NBRC 101832 / S2 / LL) protein is Tetrahydromethanopterin S-methyltransferase subunit H.